A 64-amino-acid chain; its full sequence is DNA gyrase inhibitor YacG (64 aa).

Zn(2+) contacts are provided by cysteine 7, cysteine 10, cysteine 26, and cysteine 30. Positions 44–64 (SIPGEPVVIANDDYNNEESDY) are disordered.

The protein belongs to the DNA gyrase inhibitor YacG family. Interacts with GyrB. The cofactor is Zn(2+).

Its function is as follows. Inhibits all the catalytic activities of DNA gyrase by preventing its interaction with DNA. Acts by binding directly to the C-terminal domain of GyrB, which probably disrupts DNA binding by the gyrase. In Idiomarina loihiensis (strain ATCC BAA-735 / DSM 15497 / L2-TR), this protein is DNA gyrase inhibitor YacG.